The chain runs to 201 residues: Recombination protein RecR (201 aa).

A C4-type zinc finger spans residues 60–75 (CSCCGNVDTSDPCTIC). The Toprim domain occupies 83–178 (ATLIVVEDVS…RVTRLAHGVP (96 aa)).

Belongs to the RecR family.

May play a role in DNA repair. It seems to be involved in an RecBC-independent recombinational process of DNA repair. It may act with RecF and RecO. The chain is Recombination protein RecR from Brucella melitensis biotype 1 (strain ATCC 23456 / CCUG 17765 / NCTC 10094 / 16M).